Here is a 171-residue protein sequence, read N- to C-terminus: Sorcin (171 aa).

EF-hand domains lie at 3-38 (MDTNSLRHIFSRVDADKSGSISANELQTSLSNGLGT), 40-69 (LNIRTVQLMVAMFDRDMNGTINFNEFLGLF), 70-105 (KYVQDWQTCFRRYDRDNSGSIDLNEFSNALISFGYH), and 106-140 (LSPQFVNLMMRRFDRNRGSIAFDDFIYACVCLQTL). The Ca(2+) site is built by Asp16, Asp18, Ser20, Ser22, Glu27, Asp53, Asp55, Asn57, Thr59, Glu64, Asp83, Asp85, Ser87, Ser89, and Glu94.

It localises to the cytoplasm. Calcium-binding protein. The chain is Sorcin from Schistosoma japonicum (Blood fluke).